Consider the following 344-residue polypeptide: Putative cyclin-Y-like protein 3 (344 aa).

The Cyclin N-terminal domain maps to 40-170 (ERYANRSLAI…FLELLEFNIH (131 aa)).

It belongs to the cyclin family. Cyclin Y subfamily.

The protein is Putative cyclin-Y-like protein 3 (CCNYL3) of Homo sapiens (Human).